Here is a 270-residue protein sequence, read N- to C-terminus: Homeobox protein pal-1 (270 aa).

Disordered stretches follow at residues Met-1–Pro-24, Val-96–Ala-130, and Leu-175–Val-201. 2 stretches are compositionally biased toward low complexity: residues Ser-14 to Pro-24 and Ser-101 to Ala-130. A DNA-binding region (homeobox) is located at residues Ala-206 to Lys-265.

This sequence belongs to the Caudal homeobox family. Interacts with tir-1 and let-756. In terms of tissue distribution, blastomeres. Embryo. Oocytes.

The protein resides in the nucleus. The protein localises to the chromosome. It is found in the centromere. Its subcellular location is the kinetochore. Its function is as follows. Transcriptional activator. Interacts with promoter regions for tbx-8.9, tbx-9, elt-1, hnd-1, scrt-1, and vab-7 genes. Binds the sequence ATTTATGAC. Binds to the enhancer region of the hlh-1 gene promoter during embryonic body wall muscle development. Activates the gene for mab-5 in embryo development. Necessary for vab-7 expression in C blastomeres in the posterior of embryos. Required for posterior V6 neuroectoblast cell fate specification during postembryonic neurogenesis (patterning) which generates the characteristic ray lineage during male tail development. Binds to ced-3 promoter and activated expression which is crucial for tail-spike cell death. Has a role in E cell specification in endoderm development and body wall muscle development. This Caenorhabditis elegans protein is Homeobox protein pal-1 (pal-1).